The primary structure comprises 145 residues: D-aminoacyl-tRNA deacylase (145 aa).

Positions 137–138 match the Gly-cisPro motif, important for rejection of L-amino acids motif; the sequence is GP.

This sequence belongs to the DTD family. Homodimer.

The protein resides in the cytoplasm. It catalyses the reaction glycyl-tRNA(Ala) + H2O = tRNA(Ala) + glycine + H(+). The catalysed reaction is a D-aminoacyl-tRNA + H2O = a tRNA + a D-alpha-amino acid + H(+). Functionally, an aminoacyl-tRNA editing enzyme that deacylates mischarged D-aminoacyl-tRNAs. Also deacylates mischarged glycyl-tRNA(Ala), protecting cells against glycine mischarging by AlaRS. Acts via tRNA-based rather than protein-based catalysis; rejects L-amino acids rather than detecting D-amino acids in the active site. By recycling D-aminoacyl-tRNA to D-amino acids and free tRNA molecules, this enzyme counteracts the toxicity associated with the formation of D-aminoacyl-tRNA entities in vivo and helps enforce protein L-homochirality. This Escherichia coli O81 (strain ED1a) protein is D-aminoacyl-tRNA deacylase.